Reading from the N-terminus, the 486-residue chain is Argininosuccinate lyase (486 aa).

This sequence belongs to the lyase 1 family. Argininosuccinate lyase subfamily.

The protein localises to the cytoplasm. The enzyme catalyses 2-(N(omega)-L-arginino)succinate = fumarate + L-arginine. Its pathway is amino-acid biosynthesis; L-arginine biosynthesis; L-arginine from L-ornithine and carbamoyl phosphate: step 3/3. The chain is Argininosuccinate lyase from Acidovorax ebreus (strain TPSY) (Diaphorobacter sp. (strain TPSY)).